Consider the following 412-residue polypeptide: O-acetyl-L-homoserine sulfhydrylase 2 (412 aa).

N6-(pyridoxal phosphate)lysine is present on lysine 202.

This sequence belongs to the trans-sulfuration enzymes family. Homotetramer. Requires pyridoxal 5'-phosphate as cofactor.

It carries out the reaction O-acetyl-L-homoserine + hydrogen sulfide = L-homocysteine + acetate. Its activity is regulated as follows. Inhibited by the carbonyl reagents hydroxylamine and phenylhydrazine. Also inhibited by methionine and propargylglycine. Functionally, catalyzes the conversion of O-acetyl-L-homoserine (OAH) into homocysteine in the methionine biosynthesis pathway. Has weak activity with O-acetyl-L-serine, O-phospho-L-serine, L-serine, O-succinyl-L-homoserine and L-homoserine. Shows a very low CTT gamma-synthase activity. This Thermus thermophilus (strain ATCC 27634 / DSM 579 / HB8) protein is O-acetyl-L-homoserine sulfhydrylase 2.